Reading from the N-terminus, the 1331-residue chain is Retrotransposon-like protein 1 (1331 aa).

Disordered regions lie at residues 1 to 123 (MMEP…SQED), 128 to 147 (TDLA…SSTV), 556 to 595 (EADE…ETFY), and 971 to 1033 (PSSE…DEPN). Over residues 19–30 (SSKQMESSEGSS) the composition is skewed to low complexity. Acidic residues-rich tracts occupy residues 109–123 (EMEE…SQED), 128–143 (TDLA…EEPD), and 569–578 (GSDDLSESEP). Residues 992 to 1001 (RRVATTTRPT) show a composition bias toward low complexity. The segment covering 1015–1024 (PESEDEEESE) has biased composition (acidic residues). The next 2 helical transmembrane spans lie at 1070-1090 (FYRS…LVML) and 1117-1137 (LFLD…TQLF). The interval 1309-1331 (SPPREGATLEELPSDADEDAGLD) is disordered. Residues 1320–1331 (LPSDADEDAGLD) are compositionally biased toward acidic residues.

It is found in the membrane. Plays an essential role in capillaries endothelial cells for the maintenance of feto-maternal interface and for development of the placenta. The sequence is that of Retrotransposon-like protein 1 (RTL1) from Bos taurus (Bovine).